The sequence spans 380 residues: Alkanesulfonate monooxygenase (380 aa).

It belongs to the SsuD family. Homotetramer.

The catalysed reaction is an alkanesulfonate + FMNH2 + O2 = an aldehyde + FMN + sulfite + H2O + 2 H(+). Catalyzes the desulfonation of aliphatic sulfonates. The chain is Alkanesulfonate monooxygenase from Pectobacterium carotovorum subsp. carotovorum (strain PC1).